The sequence spans 192 residues: Small ribosomal subunit protein eS7 (192 aa).

It belongs to the eukaryotic ribosomal protein eS7 family.

In Anopheles gambiae (African malaria mosquito), this protein is Small ribosomal subunit protein eS7 (RpS7).